The following is a 148-amino-acid chain: Large ribosomal subunit protein uL15 (148 aa).

A disordered region spans residues 1-61; it reads MELNELRPAV…GGQMPMQRRL (61 aa). Positions 30-39 are enriched in basic residues; it reads TATKGHKGQK.

This sequence belongs to the universal ribosomal protein uL15 family. As to quaternary structure, part of the 50S ribosomal subunit.

Its function is as follows. Binds to the 23S rRNA. The polypeptide is Large ribosomal subunit protein uL15 (Geobacter sulfurreducens (strain ATCC 51573 / DSM 12127 / PCA)).